The sequence spans 244 residues: Kallikrein-6 (244 aa).

Residues 1–16 form the signal peptide; it reads MKKLMVVLSLIAAAWA. Positions 17-21 are cleaved as a propeptide — activation peptide; the sequence is EEQNK. The region spanning 22 to 242 is the Peptidase S1 domain; it reads LVHGGPCDKT…YTNWIQKTIQ (221 aa). 6 cysteine pairs are disulfide-bonded: C28/C157, C47/C63, C131/C231, C138/C203, C168/C182, and C193/C218. Active-site charge relay system residues include H62 and D106. N134 carries N-linked (GlcNAc...) asparagine glycosylation. The Charge relay system role is filled by S197.

Inactivated by autolytic cleavage after Arg-80. In fluids, highest levels found in milk of lactating women followed by cerebrospinal fluid, nipple aspirate fluid and breast cyst fluid. Also found in serum, seminal plasma and some amniotic fluids and breast tumor cytosolic extracts. Not detected in urine. At the tissue level, highest concentrations found in glandular tissues such as salivary glands followed by lung, colon, fallopian tube, placenta, breast, pituitary and kidney. Not detected in skin, spleen, bone, thyroid, heart, ureter, liver, muscle, endometrium, testis, pancreas, seminal vesicle, ovary, adrenals and prostate. In brain, detected in gray matter neurons (at protein level). Colocalizes with pathological inclusions such as Lewy bodies and glial cytoplasmic inclusions. Overexpressed in primary breast tumors but not expressed in metastatic tumors.

The protein localises to the secreted. Its subcellular location is the nucleus. It localises to the nucleolus. The protein resides in the cytoplasm. It is found in the mitochondrion. The protein localises to the microsome. With respect to regulation, inhibited by a range of serine protease inhibitors including soybean trypsin inhibitor, benzamidine and serpins. Activated by a range of glycosaminoglycans including chondroitin sulfate, dermatan sulfate, heparan sulfate and heparin. Serine protease which exhibits a preference for Arg over Lys in the substrate P1 position and for Ser or Pro in the P2 position. Shows activity against amyloid precursor protein, myelin basic protein, gelatin, casein and extracellular matrix proteins such as fibronectin, laminin, vitronectin and collagen. Degrades alpha-synuclein and prevents its polymerization, indicating that it may be involved in the pathogenesis of Parkinson disease and other synucleinopathies. May be involved in regulation of axon outgrowth following spinal cord injury. Tumor cells treated with a neutralizing KLK6 antibody migrate less than control cells, suggesting a role in invasion and metastasis. This chain is Kallikrein-6 (KLK6), found in Homo sapiens (Human).